Here is a 269-residue protein sequence, read N- to C-terminus: MSSLNQDQIKTLEQSRQRLIQLTHSLASLITSLNQSDPLPSWTSLQSQATIISNNLLTISDHLSDNRDLLSNIVAYPDASYPSRVPANNVALEQVLRTKLDPRVEDWVARGRRAGAPTTSSDAGAGALGQYQTSSGQRLLSDDAIAELWDWAPVAANEEARKRNWGGNYTLEEREMGIENVVTGLSRVLEDDDEEDESDSEEGEGEADEMEVVGARRRSGAGAGLEFDIAAANTGSGANAGAGAKVVAPVVPLDEILRFMTTGAVPGQR.

The disordered stretch occupies residues 187 to 217 (RVLEDDDEEDESDSEEGEGEADEMEVVGARR). Over residues 190-211 (EDDDEEDESDSEEGEGEADEME) the composition is skewed to acidic residues.

This sequence belongs to the Mediator complex subunit 8 family. In terms of assembly, component of the Mediator complex.

It is found in the nucleus. Component of the Mediator complex, a coactivator involved in the regulated transcription of nearly all RNA polymerase II-dependent genes. Mediator functions as a bridge to convey information from gene-specific regulatory proteins to the basal RNA polymerase II transcription machinery. Mediator is recruited to promoters by direct interactions with regulatory proteins and serves as a scaffold for the assembly of a functional preinitiation complex with RNA polymerase II and the general transcription factors. This is Mediator of RNA polymerase II transcription subunit 8 (med8) from Aspergillus niger (strain ATCC MYA-4892 / CBS 513.88 / FGSC A1513).